We begin with the raw amino-acid sequence, 185 residues long: dCTP deaminase (185 aa).

Residues 107-112 (KSTYAR), 131-133 (TLE), glutamine 152, tyrosine 166, and glutamine 176 each bind dCTP. Catalysis depends on glutamate 133, which acts as the Proton donor/acceptor.

This sequence belongs to the dCTP deaminase family. Homotrimer.

The catalysed reaction is dCTP + H2O + H(+) = dUTP + NH4(+). The protein operates within pyrimidine metabolism; dUMP biosynthesis; dUMP from dCTP (dUTP route): step 1/2. Functionally, catalyzes the deamination of dCTP to dUTP. This Anaplasma marginale (strain Florida) protein is dCTP deaminase.